The sequence spans 823 residues: MKLFGFGSRRGQTAQGSIDHVYTGSGYRIRDSELQKIHRAAVKGDAAEVERCLARRSGDLDALDKQHRTALHLACASGHVQVVTLLVNRKCQIDVCDKENRTPLIQAVHCQEEACAVILLEHGANPNLKDIYGNTALHYAVYSESTSLAEKLLSHGAHIEALDKDNNTPLLFAIICKKEKMVEFLLKRKASSHAVDRLRRSALMLAVYYDSPGIVNILLKQNIDVFAQDMCGRDAEDYAISHHLTKIQQQILEHKKKILKKEKSDVGSSDESAVSIFHELRVDSLPASDDKDLNVATKQCVPEKVSEPLPGSSHEKGNRIVNGQGEGPPAKHPSLKPSTEVEDPAVKGAVQRKNVQTLRAEQALPVASEEEQERHERSEKKQPQVKEGNNTNKSEKIQLSENICDSTSSAAAGRLTQQRKIGKTYPQQFPKKLKEEHDRCTLKQENEEKTNVNMLYKKNREELERKEKQYKKEVEAKQLEPTVQSLEMKSKTARNTPNRDFHNHEEMKGLMDENCILKADIAILRQEICTMKNDNLEKENKYLKDIKIVKETNAALEKYIKLNEEMITETAFRYQQELNYLKAENTRLNAELLKEKESKKRLEADIESYQSRLAAAISKHSESVKTERNLKLALERTRDVSVQVEMSSAISKVKDENEFLTEQLSETQIKFNALKDKFRKTRDSLRKKSLALETVQNDLSQTQQQTQEMKEMYQNAEAKVNNSTGKWNCVEERICHLQRENAWLVQQLDDVHQKEDHKEIVTNIQRGFIESGKKDLVLEEKSKKLMNECDHLKESLFQYEREKTEGVVSIKEDKYFQTSRKTI.

ANK repeat units follow at residues 66–95 (QHRTALHLACASGHVQVVTLLVNRKCQIDV), 99–128 (ENRTPLIQAVHCQEEACAVILLEHGANPNL), 132–161 (YGNTALHYAVYSESTSLAEKLLSHGAHIEA), 165–194 (DNNTPLLFAIICKKEKMVEFLLKRKASSHA), and 198–227 (LRRSALMLAVYYDSPGIVNILLKQNIDVFA). 2 disordered regions span residues 301–343 (VPEK…EVED) and 355–402 (VQTL…LSEN). Basic and acidic residues predominate over residues 372–384 (QERHERSEKKQPQ). Coiled coils occupy residues 431-480 (KKLK…KQLE), 571-724 (AFRY…NNST), and 776-805 (LVLEEKSKKLMNECDHLKESLFQYEREKTE).

This is Putative ankyrin repeat domain-containing protein 20A3 from Homo sapiens (Human).